Here is a 509-residue protein sequence, read N- to C-terminus: Steroid 17-alpha-hydroxylase/17,20 lyase (509 aa).

Residue N202 participates in substrate binding. C442 contributes to the heme binding site.

The protein belongs to the cytochrome P450 family. Requires heme as cofactor.

Its subcellular location is the endoplasmic reticulum membrane. The protein resides in the microsome membrane. It catalyses the reaction a C21-steroid + reduced [NADPH--hemoprotein reductase] + O2 = a 17alpha-hydroxy-C21-steroid + oxidized [NADPH--hemoprotein reductase] + H2O + H(+). It carries out the reaction progesterone + reduced [NADPH--hemoprotein reductase] + O2 = 17alpha-hydroxyprogesterone + oxidized [NADPH--hemoprotein reductase] + H2O + H(+). The enzyme catalyses pregnenolone + reduced [NADPH--hemoprotein reductase] + O2 = 17alpha-hydroxypregnenolone + oxidized [NADPH--hemoprotein reductase] + H2O + H(+). The catalysed reaction is 17alpha-hydroxyprogesterone + reduced [NADPH--hemoprotein reductase] + O2 = androst-4-ene-3,17-dione + acetate + oxidized [NADPH--hemoprotein reductase] + H2O + 2 H(+). It catalyses the reaction 17alpha-hydroxyprogesterone + reduced [NADPH--hemoprotein reductase] + O2 = 16alpha,17alpha-dihydroxyprogesterone + oxidized [NADPH--hemoprotein reductase] + H2O + H(+). It carries out the reaction 16alpha,17alpha-dihydroxyprogesterone + reduced [NADPH--hemoprotein reductase] + O2 = 6beta,16alpha,17alpha-trihydroxyprogesterone + oxidized [NADPH--hemoprotein reductase] + H2O + H(+). The enzyme catalyses 17alpha-hydroxypregnenolone + reduced [NADPH--hemoprotein reductase] + O2 = 3beta-hydroxyandrost-5-en-17-one + acetate + oxidized [NADPH--hemoprotein reductase] + H2O + 2 H(+). The catalysed reaction is 16alpha,17alpha-dihydroxypregnenolone + reduced [NADPH--hemoprotein reductase] + O2 = 3beta,16alpha-dihydroxy-androst-5-en-17-one + acetate + oxidized [NADPH--hemoprotein reductase] + H2O + 2 H(+). It catalyses the reaction 3beta-hydroxyandrost-5-en-17-one + reduced [NADPH--hemoprotein reductase] + O2 = 3beta,16alpha-dihydroxy-androst-5-en-17-one + oxidized [NADPH--hemoprotein reductase] + H2O + H(+). It carries out the reaction androst-4-ene-3,17-dione + reduced [NADPH--hemoprotein reductase] + O2 = 16alpha-hydroxyandrost-4-ene-3,17-dione + oxidized [NADPH--hemoprotein reductase] + H2O + H(+). The protein operates within steroid hormone biosynthesis. It functions in the pathway steroid biosynthesis; glucocorticoid biosynthesis. Regulated predominantly by intracellular cAMP levels. The 17,20-lyase activity is stimulated by cytochrome b5, which acts as an allosteric effector increasing the Vmax of the lyase activity. In terms of biological role, a cytochrome P450 monooxygenase involved in corticoid and androgen biosynthesis. Catalyzes 17-alpha hydroxylation of C21 steroids, which is common for both pathways. A second oxidative step, required only for androgen synthesis, involves an acyl-carbon cleavage. The 17-alpha hydroxy intermediates, as part of adrenal glucocorticoids biosynthesis pathway, are precursors of cortisol. Hydroxylates steroid hormones, pregnenolone and progesterone to form 17-alpha hydroxy metabolites, followed by the cleavage of the C17-C20 bond to form C19 steroids, dehydroepiandrosterone (DHEA) and androstenedione. Has 16-alpha hydroxylase activity. Catalyzes 16-alpha hydroxylation of 17-alpha hydroxy pregnenolone, followed by the cleavage of the C17-C20 bond to form 16-alpha-hydroxy DHEA. Also 16-alpha hydroxylates androgens, relevant for estriol synthesis. Mechanistically, uses molecular oxygen inserting one oxygen atom into a substrate, and reducing the second into a water molecule, with two electrons provided by NADPH via cytochrome P450 reductase (CPR; NADPH-ferrihemoprotein reductase). The protein is Steroid 17-alpha-hydroxylase/17,20 lyase (CYP17A1) of Ovis aries (Sheep).